The chain runs to 434 residues: Angio-associated migratory cell protein (434 aa).

Residues 1–63 (MESESESGAA…EEEEEEGNEE (63 aa)) form a disordered region. Ser20 is subject to Phosphoserine. Acidic residues predominate over residues 39 to 62 (DPDDLAQEMEDVDFEEEEEEEGNE). WD repeat units follow at residues 89–129 (LHSA…LLFE), 132–171 (GHKD…EVWS), 173–212 (EAGD…KTFQ), 214–254 (PNCP…HVLK), 258–299 (GHQG…GVFR), 315–354 (SESN…LRHQ), 356–395 (QHQS…LLTD), and 398–433 (GHTA…QRPD).

As to expression, expressed in metastatic melanoma, liver, skin, kidney, heart, lung, lymph node, skeletal muscle and brain, and also in A2058 melanoma cells and activated T-cells (at protein level). Expressed in blood vessels. Strongly expressed in endothelial cells, cytotrophoblasts, and poorly differentiated. colon adenocarcinoma cells found in lymphatics.

The protein localises to the cell membrane. Its subcellular location is the cytoplasm. Functionally, plays a role in angiogenesis and cell migration. In smooth muscle cell migration, may act through the RhoA pathway. The polypeptide is Angio-associated migratory cell protein (AAMP) (Homo sapiens (Human)).